The following is a 239-amino-acid chain: MGKPEFYDFCVHAVPDGANAVEELSSLSRHLGYSGIALANHSDKLPSKKPVLPSIEGFEVFRGIELVEENPSKLHGLVGKFRSSMDVLIVHGGSEAVNRAALENPRVDILNHPAFDKSSGLNQVLAKAAAENGVAIGITLRPLLHSRGSRRIRMLSDLKANLELARKYDVPLVLCSDAMSCYDLRSPMETLAFAEVCGLEEDEALDALSTVPKKIIKKNRPGPGYVREGIEVLEGEDIF.

The protein belongs to the eukaryotic/archaeal RNase P protein component 3 family. Consists of a catalytic RNA component and at least 4-5 protein subunits.

Its subcellular location is the cytoplasm. The enzyme catalyses Endonucleolytic cleavage of RNA, removing 5'-extranucleotides from tRNA precursor.. Its function is as follows. Part of ribonuclease P, a protein complex that generates mature tRNA molecules by cleaving their 5'-ends. In Methanosarcina mazei (strain ATCC BAA-159 / DSM 3647 / Goe1 / Go1 / JCM 11833 / OCM 88) (Methanosarcina frisia), this protein is Ribonuclease P protein component 3.